Here is a 436-residue protein sequence, read N- to C-terminus: Cytochrome b5-related protein (436 aa).

One can recognise a Cytochrome b5 heme-binding domain in the interval 16–100; sequence PTYRNSALIT…IAKYKVRDAA (85 aa). Residues H59 and H82 each contribute to the heme site.

Muscle.

May play a role in muscle cell metabolism. This Drosophila melanogaster (Fruit fly) protein is Cytochrome b5-related protein (Cyt-b5-r).